The primary structure comprises 50 residues: DNA replication protein repEA (50 aa).

Functionally, involved in T4 DNA replication. Binds to ssDNA. The protein is DNA replication protein repEA (repEA) of Enterobacteria phage T4 (Bacteriophage T4).